A 278-amino-acid chain; its full sequence is Nucleotide-binding protein Tlet_0523 (278 aa).

9 to 16 serves as a coordination point for ATP; it reads GLSGAGKS. Residue 58-61 coordinates GTP; it reads DIRS.

This sequence belongs to the RapZ-like family.

In terms of biological role, displays ATPase and GTPase activities. The sequence is that of Nucleotide-binding protein Tlet_0523 from Pseudothermotoga lettingae (strain ATCC BAA-301 / DSM 14385 / NBRC 107922 / TMO) (Thermotoga lettingae).